The chain runs to 127 residues: uncharacterized protein (127 aa).

Positions 1-34 (MKNPESSGVSSSPQIQRVSPSSSSTSPSPPSIGT) are disordered. Residues 9–34 (VSSSPQIQRVSPSSSSTSPSPPSIGT) are compositionally biased toward low complexity. 2 consecutive transmembrane segments (helical) span residues 47–67 (IAAV…PLAM) and 84–104 (TIAV…YLLV).

Its subcellular location is the membrane. This is an uncharacterized protein from Saccharomyces cerevisiae (strain ATCC 204508 / S288c) (Baker's yeast).